Here is a 160-residue protein sequence, read N- to C-terminus: Small ribosomal subunit protein uS17z (160 aa).

Belongs to the universal ribosomal protein uS17 family.

It is found in the cytoplasm. The protein is Small ribosomal subunit protein uS17z (RPS11A) of Arabidopsis thaliana (Mouse-ear cress).